We begin with the raw amino-acid sequence, 126 residues long: Large ribosomal subunit protein uL22 (126 aa).

Belongs to the universal ribosomal protein uL22 family. In terms of assembly, part of the 50S ribosomal subunit.

Its function is as follows. This protein binds specifically to 23S rRNA; its binding is stimulated by other ribosomal proteins, e.g. L4, L17, and L20. It is important during the early stages of 50S assembly. It makes multiple contacts with different domains of the 23S rRNA in the assembled 50S subunit and ribosome. Functionally, the globular domain of the protein is located near the polypeptide exit tunnel on the outside of the subunit, while an extended beta-hairpin is found that lines the wall of the exit tunnel in the center of the 70S ribosome. This Prochlorococcus marinus (strain NATL2A) protein is Large ribosomal subunit protein uL22.